A 1596-amino-acid polypeptide reads, in one-letter code: Cellulose synthase 2 (1596 aa).

The segment at 1–749 (MIYRAILKRL…RSARHGATAS (749 aa)) is catalytic. Helical transmembrane passes span 25–45 (SPFV…GVTI) and 106–126 (LSLL…LSYF). The segment at 145–238 (DWPVVDVYVP…YVVIFDCDHI (94 aa)) is catalytic subdomain A. Residue Asp-187 is part of the active site. The substrate site is built by Asp-234 and Asp-236. Residues 315 to 375 (SAVLGIGGFA…GQRVRWARGM (61 aa)) are catalytic subdomain B. The active site involves Asp-331. Helical transmembrane passes span 396-416 (LCYL…VFLA), 421-441 (FLFL…VYAF), 505-525 (FDLN…LALV), and 544-564 (FALN…SIAV). The PilZ domain occupies 570 to 669 (QIRHKPRVRA…ERQIVEFMFG (100 aa)). The cyclic di-GMP binding domain stretch occupies residues 750-1596 (LIVLLGLPAA…RVKDTTDASH (847 aa)). Disordered regions lie at residues 769–812 (SRAT…IAPA) and 828–868 (TGPA…APPI). Pro residues predominate over residues 783–809 (VEPPPVNAPPPPSLPQPPGTLPTPPQI). A helical transmembrane segment spans residues 1553 to 1573 (LTLYVLGLVGAGLVAAAAVRL).

This sequence in the N-terminal section; belongs to the glycosyltransferase 2 family. It in the C-terminal section; belongs to the AcsB/BcsB family.

It localises to the cell inner membrane. It catalyses the reaction [(1-&gt;4)-beta-D-glucosyl](n) + UDP-alpha-D-glucose = [(1-&gt;4)-beta-D-glucosyl](n+1) + UDP + H(+). This Novacetimonas hansenii (Komagataeibacter hansenii) protein is Cellulose synthase 2 (acsAII).